We begin with the raw amino-acid sequence, 85 residues long: Small ribosomal subunit protein uS17 (85 aa).

This sequence belongs to the universal ribosomal protein uS17 family. Part of the 30S ribosomal subunit.

In terms of biological role, one of the primary rRNA binding proteins, it binds specifically to the 5'-end of 16S ribosomal RNA. This Lachnoclostridium phytofermentans (strain ATCC 700394 / DSM 18823 / ISDg) (Clostridium phytofermentans) protein is Small ribosomal subunit protein uS17.